We begin with the raw amino-acid sequence, 63 residues long: High-potential iron-sulfur protein (63 aa).

Residues Cys23, Cys26, Cys41, and Cys56 each coordinate [4Fe-4S] cluster.

This sequence belongs to the high-potential iron-sulfur protein (HiPIP) family. As to quaternary structure, homodimer.

Its function is as follows. Specific class of high-redox-potential 4Fe-4S ferredoxins. Functions in anaerobic electron transport in most purple and in some other photosynthetic bacteria and in at least one genus (Paracoccus) of halophilic, denitrifying bacteria. In Rhodocyclus tenuis (Rhodospirillum tenue), this protein is High-potential iron-sulfur protein (hip).